Reading from the N-terminus, the 471-residue chain is Mixed lineage kinase domain-like protein (471 aa).

Positions 1–149 (MENLKHIITL…DADEDRRAFQ (149 aa)) are N-terminal bundle and brace (NBB); mediates INSP6 binding. Positions 55–84 (SEKLTTAMNRFKAALEEANGEIEKFSNRSN) form a coiled coil. Phosphoserine is present on S125. Positions 139–180 (QDADEDRRAFQMLRRDNEKIEASLRRLEINMKEIKETLRQYL) form a coiled coil. Positions 194–469 (KEIKKEQLSG…DEILKKLSTF (276 aa)) constitute a Protein kinase domain. Residues 209-217 (LRENEVSTL) and K230 contribute to the ATP site. Residue T357 is modified to Phosphothreonine; by RIPK3. Phosphoserine; by RIPK3 occurs at positions 358 and 360.

This sequence belongs to the protein kinase superfamily. In terms of assembly, homooligomer. Homotrimer; forms homotrimers on necroptosis induction. Upon TNF-induced necrosis, forms in complex with PGAM5, RIPK1 and RIPK3. Within this complex, may play a role in the proper targeting of RIPK1-RIPK3 to its downstream effector PGAM5. Interacts with RIPK3; the interaction is direct and promotes its phosphorylation and subsequent activation. In terms of processing, phosphorylation by RIPK3 induces a conformational switch that is required for necroptosis. It also induces homotrimerization and localization to the plasma membrane.

Its subcellular location is the cytoplasm. It is found in the cell membrane. The protein localises to the nucleus. Activated via binding to highly phosphorylated inositol phosphates such as inositolhexakisphosphate (InsP6) which mediates the release of an N-terminal auto-inhibitory region. Activation requires not only RIPK3-dependent phosphorylation but also binding to highly phosphorylated inositol phosphates. Inhibited by necrosulfonamide, a specific inhibitor of necroptosis that targets Cys-86. In terms of biological role, pseudokinase that plays a key role in TNF-induced necroptosis, a programmed cell death process. Does not have protein kinase activity. Activated following phosphorylation by RIPK3, leading to homotrimerization, localization to the plasma membrane and execution of programmed necrosis characterized by calcium influx and plasma membrane damage. In addition to TNF-induced necroptosis, necroptosis can also take place in the nucleus in response to orthomyxoviruses infection: following activation by ZBP1, MLKL is phosphorylated by RIPK3 in the nucleus, triggering disruption of the nuclear envelope and leakage of cellular DNA into the cytosol.following ZBP1 activation, which senses double-stranded Z-RNA structures, nuclear RIPK3 catalyzes phosphorylation and activation of MLKL, promoting disruption of the nuclear envelope and leakage of cellular DNA into the cytosol. Binds to highly phosphorylated inositol phosphates such as inositolhexakisphosphate (InsP6) which is essential for its necroptotic function. This is Mixed lineage kinase domain-like protein from Homo sapiens (Human).